A 336-amino-acid chain; its full sequence is Biotin synthase (336 aa).

One can recognise a Radical SAM core domain in the interval 54–281 (NAIQLSTLLS…KAMVRLSAGR (228 aa)). Positions 69, 73, and 76 each coordinate [4Fe-4S] cluster. Residues C113, C144, C204, and R276 each coordinate [2Fe-2S] cluster.

The protein belongs to the radical SAM superfamily. Biotin synthase family. Homodimer. [4Fe-4S] cluster is required as a cofactor. The cofactor is [2Fe-2S] cluster.

The catalysed reaction is (4R,5S)-dethiobiotin + (sulfur carrier)-SH + 2 reduced [2Fe-2S]-[ferredoxin] + 2 S-adenosyl-L-methionine = (sulfur carrier)-H + biotin + 2 5'-deoxyadenosine + 2 L-methionine + 2 oxidized [2Fe-2S]-[ferredoxin]. It functions in the pathway cofactor biosynthesis; biotin biosynthesis; biotin from 7,8-diaminononanoate: step 2/2. Catalyzes the conversion of dethiobiotin (DTB) to biotin by the insertion of a sulfur atom into dethiobiotin via a radical-based mechanism. The chain is Biotin synthase from Burkholderia mallei (strain ATCC 23344).